Here is a 60-residue protein sequence, read N- to C-terminus: Myrmicitoxin(1)-Pr4a (60 aa).

An N-terminal signal peptide occupies residues 1-23; it reads MKAIIFLFAVLTVVAIIIPIISG. The propeptide occupies 24–33; that stretch reads EPNAGPHAAS. Gln-59 is subject to Glutamine amide.

Belongs to the formicidae venom clade 2 family. As to expression, expressed by the venom gland.

The protein resides in the secreted. Its function is as follows. Toxin that causes a rapid and irreversible paralysis when intrathoracically injected into insects (blowflies). Does not cause spontaneous nocifensive behaviors by intraplantar injection in mice. The polypeptide is Myrmicitoxin(1)-Pr4a (Pogonomyrmex rugosus (Desert harvester ant)).